The chain runs to 144 residues: Deoxyuridine 5'-triphosphate nucleotidohydrolase (144 aa).

Substrate contacts are provided by residues 63 to 65 (RSG), N76, and 80 to 82 (TID).

Belongs to the dUTPase family. The cofactor is Mg(2+).

The enzyme catalyses dUTP + H2O = dUMP + diphosphate + H(+). The protein operates within pyrimidine metabolism; dUMP biosynthesis; dUMP from dCTP (dUTP route): step 2/2. In terms of biological role, this enzyme is involved in nucleotide metabolism: it produces dUMP, the immediate precursor of thymidine nucleotides and it decreases the intracellular concentration of dUTP so that uracil cannot be incorporated into DNA. The sequence is that of Deoxyuridine 5'-triphosphate nucleotidohydrolase from Bacteroides thetaiotaomicron (strain ATCC 29148 / DSM 2079 / JCM 5827 / CCUG 10774 / NCTC 10582 / VPI-5482 / E50).